The chain runs to 123 residues: uncharacterized protein (123 aa).

Residues 100–123 (NKQPKTTHHFSTNSSEYKSRKSKH) form a disordered region.

This is an uncharacterized protein from Acanthamoeba polyphaga mimivirus (APMV).